Consider the following 351-residue polypeptide: Fe(3+) ions import ATP-binding protein FbpC (351 aa).

The ABC transporter domain occupies 7–237; that stretch reads VELKNVTKRF…PASEFMASFM (231 aa). Residue 39–46 coordinates ATP; it reads GPSGCGKT.

It belongs to the ABC transporter superfamily. Fe(3+) ion importer (TC 3.A.1.10) family. As to quaternary structure, the complex is composed of two ATP-binding proteins (FbpC), two transmembrane proteins (FbpB) and a solute-binding protein (FbpA).

The protein resides in the cell inner membrane. The enzyme catalyses Fe(3+)(out) + ATP + H2O = Fe(3+)(in) + ADP + phosphate + H(+). Functionally, part of the ABC transporter complex FbpABC involved in Fe(3+) ions import. Responsible for energy coupling to the transport system. This is Fe(3+) ions import ATP-binding protein FbpC from Photorhabdus laumondii subsp. laumondii (strain DSM 15139 / CIP 105565 / TT01) (Photorhabdus luminescens subsp. laumondii).